Consider the following 234-residue polypeptide: UPF0173 metal-dependent hydrolase R01310 (234 aa).

Belongs to the UPF0173 family.

The sequence is that of UPF0173 metal-dependent hydrolase R01310 from Rhizobium meliloti (strain 1021) (Ensifer meliloti).